The primary structure comprises 233 residues: Putative 26S proteasome non-ATPase regulatory subunit 8 homolog B (233 aa).

Methionine 1 carries the N-acetylmethionine modification. One can recognise a PCI domain in the interval 38–217 (DHYLISLSLN…APCKEIPSLQ (180 aa)).

This sequence belongs to the proteasome subunit S14 family. In terms of assembly, component of the 19S regulatory particle (RP/PA700) lid subcomplex of the 26S proteasome. The 26S proteasome is composed of a core protease (CP), known as the 20S proteasome, capped at one or both ends by the 19S regulatory particle (RP/PA700). The RP/PA700 complex is composed of at least 17 different subunits in two subcomplexes, the base and the lid, which form the portions proximal and distal to the 20S proteolytic core, respectively. Interacts with UCH1 and UCH2.

Functionally, acts as a regulatory subunit of the 26S proteasome which is involved in the ATP-dependent degradation of ubiquitinated proteins. The sequence is that of Putative 26S proteasome non-ATPase regulatory subunit 8 homolog B from Arabidopsis thaliana (Mouse-ear cress).